We begin with the raw amino-acid sequence, 326 residues long: MVDYYEVLGVQRHASPEDIKKAYRKLALKWHPDKNPENKEEAERKFKQVAEAYEVLSDAKKRDIYDKYGKEGLNGGGGGGSHFDSPFEFGFTFRNPDDVFREFFGGRDPFSFDFFEDPFEDFFGNRRGPRGSRSRGTGSFFSAFSGFPSFGSGFSSFDTGFTSFGSLGHGGLTSFSSTSFGGSGMGNFKSISTSTKMVNGRKITTKRIVENGQERVEVGEDGQLKSLTINGVADDDALAEERMRRGQNALPAQPAGLRPPKPPRPASLLRHAPHCLSEEEGEQDRPRAPGPWDPLASAAGLKEGGKRKKQKQREESKKKKSTKGNH.

Residues 2–69 enclose the J domain; that stretch reads VDYYEVLGVQ…KKRDIYDKYG (68 aa). Positions 2–146 are interaction with HSP70; it reads VDYYEVLGVQ…TGSFFSAFSG (145 aa). The interval 119–242 is interaction with KRT18; it reads FEDFFGNRRG…ADDDALAEER (124 aa). Residue Arg135 is modified to Omega-N-methylarginine. The interval 249–326 is disordered; the sequence is ALPAQPAGLR…KKKKSTKGNH (78 aa). Position 277 is a phosphoserine (Ser277).

In terms of assembly, homooligomer. Interacts with BAG3, HSPB8 and STUB1. Interacts with ALKBH1. Interacts with HSP70, KRT18 and PTTG.

It localises to the cytoplasm. The protein localises to the perinuclear region. Its subcellular location is the nucleus. The protein resides in the myofibril. It is found in the sarcomere. It localises to the z line. Has a stimulatory effect on the ATPase activity of HSP70 in a dose-dependent and time-dependent manner and hence acts as a co-chaperone of HSP70. Plays an indispensable role in the organization of KRT8/KRT18 filaments. Acts as an endogenous molecular chaperone for neuronal proteins including huntingtin. Suppresses aggregation and toxicity of polyglutamine-containing, aggregation-prone proteins. Also reduces cellular toxicity and caspase-3 activity. The sequence is that of DnaJ homolog subfamily B member 6 (DNAJB6) from Pongo abelii (Sumatran orangutan).